Here is a 581-residue protein sequence, read N- to C-terminus: Proline--tRNA ligase (581 aa).

This sequence belongs to the class-II aminoacyl-tRNA synthetase family. ProS type 1 subfamily. As to quaternary structure, homodimer.

Its subcellular location is the cytoplasm. The enzyme catalyses tRNA(Pro) + L-proline + ATP = L-prolyl-tRNA(Pro) + AMP + diphosphate. Its function is as follows. Catalyzes the attachment of proline to tRNA(Pro) in a two-step reaction: proline is first activated by ATP to form Pro-AMP and then transferred to the acceptor end of tRNA(Pro). As ProRS can inadvertently accommodate and process non-cognate amino acids such as alanine and cysteine, to avoid such errors it has two additional distinct editing activities against alanine. One activity is designated as 'pretransfer' editing and involves the tRNA(Pro)-independent hydrolysis of activated Ala-AMP. The other activity is designated 'posttransfer' editing and involves deacylation of mischarged Ala-tRNA(Pro). The misacylated Cys-tRNA(Pro) is not edited by ProRS. The chain is Proline--tRNA ligase from Rhodococcus erythropolis (strain PR4 / NBRC 100887).